Here is a 300-residue protein sequence, read N- to C-terminus: Ribosomal RNA small subunit methyltransferase A (300 aa).

Residues Asn36, Val38, Gly63, Glu84, Asp113, and Asn131 each contribute to the S-adenosyl-L-methionine site.

Belongs to the class I-like SAM-binding methyltransferase superfamily. rRNA adenine N(6)-methyltransferase family. RsmA subfamily.

Its subcellular location is the cytoplasm. The enzyme catalyses adenosine(1518)/adenosine(1519) in 16S rRNA + 4 S-adenosyl-L-methionine = N(6)-dimethyladenosine(1518)/N(6)-dimethyladenosine(1519) in 16S rRNA + 4 S-adenosyl-L-homocysteine + 4 H(+). In terms of biological role, specifically dimethylates two adjacent adenosines (A1518 and A1519) in the loop of a conserved hairpin near the 3'-end of 16S rRNA in the 30S particle. May play a critical role in biogenesis of 30S subunits. The sequence is that of Ribosomal RNA small subunit methyltransferase A from Kineococcus radiotolerans (strain ATCC BAA-149 / DSM 14245 / SRS30216).